The sequence spans 146 residues: Probable gamma-secretase subunit PEN-2 (146 aa).

The segment at 1–26 is disordered; that stretch reads MEATRSDDPSLNPIRNRNPNPNPNPN. Over 1 to 61 the chain is Lumenal; that stretch reads MEATRSDDPS…SVDYARRFYK (61 aa). A compositionally biased stretch (low complexity) spans 9 to 19; the sequence is PSLNPIRNRNP. The chain crosses the membrane as a helical span at residues 62–82; that stretch reads FGFALLPWLWFVNCFYFWPVL. Residues 83-98 are Cytoplasmic-facing; sequence RHSRAFPQIRNYVVRS. A helical transmembrane segment spans residues 99–119; sequence AIGFSVFTALLSAWALTFSIG. The Lumenal portion of the chain corresponds to 120 to 146; sequence GEQLFGPLYDKLVMYNVADRLGLSGLA.

This sequence belongs to the PEN-2 family. As to quaternary structure, probable component of the gamma-secretase complex, a complex composed of a presenilin homodimer, nicastrin, APH1 and PEN2.

It is found in the membrane. Functionally, probable subunit of the gamma-secretase complex, an endoprotease complex that catalyzes the intramembrane cleavage of integral membrane proteins such as Notch receptors. The protein is Probable gamma-secretase subunit PEN-2 of Arabidopsis thaliana (Mouse-ear cress).